The chain runs to 327 residues: L-lactate dehydrogenase 1 (327 aa).

Residues Val-21, Asp-42, Lys-47, Tyr-72, and 86-87 (GA) each bind NAD(+). Substrate-binding positions include Gln-89, Arg-95, and 127–130 (NPVD). Residues 125-127 (AAN) and Ser-150 each bind NAD(+). 155 to 158 (DSAR) lines the substrate pocket. Beta-D-fructose 1,6-bisphosphate is bound by residues Arg-160 and His-175. His-182 acts as the Proton acceptor in catalysis. A Phosphotyrosine modification is found at Tyr-227. Residue Thr-236 coordinates substrate.

The protein belongs to the LDH/MDH superfamily. LDH family. As to quaternary structure, homotetramer.

The protein localises to the cytoplasm. The catalysed reaction is (S)-lactate + NAD(+) = pyruvate + NADH + H(+). The protein operates within fermentation; pyruvate fermentation to lactate; (S)-lactate from pyruvate: step 1/1. With respect to regulation, allosterically activated by fructose 1,6-bisphosphate (FBP). Its function is as follows. Catalyzes the conversion of lactate to pyruvate. This is L-lactate dehydrogenase 1 from Enterococcus faecalis (strain ATCC 700802 / V583).